The following is a 301-amino-acid chain: Dimethylsulfoniopropionate lyase (301 aa).

Active-site proton donor/acceptor residues include Cys111 and Cys230.

The protein belongs to the aspartate/glutamate racemases family. ALMA1 subfamily. Homotetramer.

It catalyses the reaction S,S-dimethyl-beta-propiothetin = acrylate + dimethyl sulfide + H(+). In terms of biological role, mediates cleavage of dimethylsulfoniopropionate (DMSP) into dimethyl sulfide (DMS) and acrylate. DMS is the principal form by which sulfur is transported from oceans to the atmosphere and is a key component of the ocean sulfur cycle. In Durusdinium sp. clade D (Symbiodinium sp. clade D), this protein is Dimethylsulfoniopropionate lyase.